The sequence spans 586 residues: Glutamate--tRNA ligase (586 aa).

Residues 114 to 124 carry the 'HIGH' region motif; that stretch reads PNPNGPWHVGH. 2 stretches are compositionally biased toward basic and acidic residues: residues 431 to 443 and 459 to 468; these read ARGE…HEAV and HPEHPDRGDR. The disordered stretch occupies residues 431 to 468; sequence ARGEGPEESHEAVEVPVDDGPDEATPQVHPEHPDRGDR.

It belongs to the class-I aminoacyl-tRNA synthetase family. Glutamate--tRNA ligase type 2 subfamily.

It localises to the cytoplasm. It catalyses the reaction tRNA(Glu) + L-glutamate + ATP = L-glutamyl-tRNA(Glu) + AMP + diphosphate. Functionally, catalyzes the attachment of glutamate to tRNA(Glu) in a two-step reaction: glutamate is first activated by ATP to form Glu-AMP and then transferred to the acceptor end of tRNA(Glu). The polypeptide is Glutamate--tRNA ligase (Halobacterium salinarum (strain ATCC 29341 / DSM 671 / R1)).